The sequence spans 230 residues: uncharacterized protein (230 aa).

A helical transmembrane segment spans residues glycine 19–glycine 39. Asparagine 41 carries N-linked (GlcNAc...) asparagine; by host glycosylation. A helical transmembrane segment spans residues serine 55–cysteine 75. 4 N-linked (GlcNAc...) asparagine; by host glycosylation sites follow: asparagine 86, asparagine 157, asparagine 168, and asparagine 182. Positions threonine 172 to aspartate 196 form a coiled coil. Residues glutamine 178 to serine 205 form a disordered region. Acidic residues predominate over residues aspartate 180–aspartate 190. A compositionally biased stretch (basic and acidic residues) spans isoleucine 191 to serine 201.

Its subcellular location is the membrane. This is an uncharacterized protein from Acanthamoeba polyphaga mimivirus (APMV).